Consider the following 109-residue polypeptide: MATSKLQALWNHPAGPKTIHFWAPTFKWGISIANIADFQKPPENISYLQQIAVTCTGMIWCRCSTIITPKNWNLFSVNVAMAATGIYQLTRKIKYDYVSEAEAAVEIEG.

The next 3 membrane-spanning stretches (helical) occupy residues 19–35, 51–67, and 74–90; these read IHFW…IANI, IAVT…STII, and LFSV…YQLT.

This sequence belongs to the mitochondrial pyruvate carrier (MPC) (TC 2.A.105) family.

The protein resides in the mitochondrion inner membrane. Functionally, mediates the uptake of pyruvate into mitochondria. This chain is Mitochondrial pyruvate carrier 2, found in Arabidopsis thaliana (Mouse-ear cress).